Consider the following 229-residue polypeptide: ATP synthase subunit a (229 aa).

Helical transmembrane passes span 25 to 45 (ADAVVYTWLIMIGLVVLSIAA), 82 to 102 (FFPLVATLALFILVSNLIGLI), 104 to 124 (GFFPPTANINTTAACAVVVFV), 142 to 162 (FLGPIAWLAPMMFFIEVIGHL), 181 to 201 (LVLIIFFGLAPFVVPLPMMLM), and 202 to 222 (GVLVSFIQAFVFMLLAMIYIQ).

The protein belongs to the ATPase A chain family. In terms of assembly, F-type ATPases have 2 components, CF(1) - the catalytic core - and CF(0) - the membrane proton channel. CF(1) has five subunits: alpha(3), beta(3), gamma(1), delta(1), epsilon(1). CF(0) has three main subunits: a(1), b(2) and c(9-12). The alpha and beta chains form an alternating ring which encloses part of the gamma chain. CF(1) is attached to CF(0) by a central stalk formed by the gamma and epsilon chains, while a peripheral stalk is formed by the delta and b chains.

It localises to the cell inner membrane. Key component of the proton channel; it plays a direct role in the translocation of protons across the membrane. The polypeptide is ATP synthase subunit a (Geobacter sp. (strain M21)).